Here is a 323-residue protein sequence, read N- to C-terminus: Transcription factor MafB (323 aa).

Lysine 32 participates in a covalent cross-link: Glycyl lysine isopeptide (Lys-Gly) (interchain with G-Cter in SUMO). The segment covering 34–43 (EPLGRAERPG) has biased composition (basic and acidic residues). 2 disordered regions span residues 34–78 (EPLG…PTEP) and 116–210 (PVPQ…VEDR). Positions 54–77 (SVSSTPLSTPCSSVPSSPSFSPTE) are enriched in low complexity. 2 stretches are compositionally biased toward basic residues: residues 129–143 (SAHHHHHHHHPHPHH) and 159–168 (AHPHHHHHHQ). Positions 192–201 (PHATAAATAA) are enriched in low complexity. The segment at 238–263 (RLKQKRRTLKNRGYAQSCRYKRVQQK) is basic motif. Residues 238 to 301 (RLKQKRRTLK…DAYKVKCEKL (64 aa)) form the bZIP domain. Residues 266–287 (LENEKTQLIQQVEQLKQEVSRL) are leucine-zipper. Lysine 297 participates in a covalent cross-link: Glycyl lysine isopeptide (Lys-Gly) (interchain with G-Cter in SUMO).

Belongs to the bZIP family. Maf subfamily. Homodimer or heterodimer with other bHLH-Zip transcription factors. Forms homodimers and heterodimers with FOS, FOSB and FOSL2, but not with JUN proteins (JUN, JUNB and JUND). Interacts with the intracellular cytoplasmic domain of LRP1 (LRPICD); the interaction results in a moderate reduction of MAFB transcriptional potential. Binds DNA as a homodimer or a heterodimer. Interacts with PAX6; the interaction is direct. Interacts with ETS1 and LRP1. Post-translationally, sumoylated. Sumoylation on Lys-32 and Lys-297 stimulates its transcriptional repression activity and promotes macrophage differentiation from myeloid progenitors. Expressed in pancreatic alpha-cells (glucagon-positive cells), in podocytes of the kidney and macrophages (at protein level). Most abundant in kidney, gut, lung and brain.

It is found in the nucleus. Functionally, acts as a transcriptional activator or repressor. Plays a pivotal role in regulating lineage-specific hematopoiesis by repressing ETS1-mediated transcription of erythroid-specific genes in myeloid cells. Required for monocytic, macrophage, osteoclast, podocyte and islet beta cell differentiation. Involved in renal tubule survival and F4/80 maturation. Activates the insulin and glucagon promoters. Together with PAX6, transactivates weakly the glucagon gene promoter through the G1 element. SUMO modification controls its transcriptional activity and ability to specify macrophage fate. Binds element G1 on the glucagon promoter. Involved either as an oncogene or as a tumor suppressor, depending on the cell context. Required for the transcriptional activation of HOXB3 in the rhombomere r5 in the hindbrain. The polypeptide is Transcription factor MafB (Mafb) (Mus musculus (Mouse)).